Here is a 284-residue protein sequence, read N- to C-terminus: tRNA-cytidine(32) 2-sulfurtransferase (284 aa).

Over residues 1-11 (MTFHQPVSETA) the composition is skewed to polar residues. A disordered region spans residues 1 to 20 (MTFHQPVSETAQPDEASGHP). The PP-loop motif signature appears at 63 to 68 (SGGKDS). The [4Fe-4S] cluster site is built by C138, C141, and C229.

It belongs to the TtcA family. In terms of assembly, homodimer. Mg(2+) is required as a cofactor. [4Fe-4S] cluster serves as cofactor.

The protein resides in the cytoplasm. It carries out the reaction cytidine(32) in tRNA + S-sulfanyl-L-cysteinyl-[cysteine desulfurase] + AH2 + ATP = 2-thiocytidine(32) in tRNA + L-cysteinyl-[cysteine desulfurase] + A + AMP + diphosphate + H(+). Its pathway is tRNA modification. Functionally, catalyzes the ATP-dependent 2-thiolation of cytidine in position 32 of tRNA, to form 2-thiocytidine (s(2)C32). The sulfur atoms are provided by the cysteine/cysteine desulfurase (IscS) system. The polypeptide is tRNA-cytidine(32) 2-sulfurtransferase (Chelativorans sp. (strain BNC1)).